The primary structure comprises 527 residues: Serine/threonine-protein kinase CHK1 (527 aa).

Residues 15 to 281 (VVLGDTVGQG…LKALKLHPWV (267 aa)) form the Protein kinase domain. Residues 21–29 (VGQGAFACV) and lysine 45 contribute to the ATP site. Residue aspartate 142 is the Proton acceptor of the active site.

It belongs to the protein kinase superfamily. CAMK Ser/Thr protein kinase family. NIM1 subfamily.

It is found in the nucleus. It carries out the reaction L-seryl-[protein] + ATP = O-phospho-L-seryl-[protein] + ADP + H(+). It catalyses the reaction L-threonyl-[protein] + ATP = O-phospho-L-threonyl-[protein] + ADP + H(+). Serine/threonine-protein kinase which is required for checkpoint-mediated cell cycle arrest and activation of DNA repair in response to the presence of DNA damage or unreplicated DNA. May also negatively regulate cell cycle progression during unperturbed cell cycles. Controls phosphorylation and abundance of PDS1 to prevent anaphase entry. Also helps prevent mitotic exit. This chain is Serine/threonine-protein kinase CHK1 (CHK1), found in Saccharomyces cerevisiae (strain ATCC 204508 / S288c) (Baker's yeast).